A 157-amino-acid chain; its full sequence is Glutaredoxin-2, mitochondrial (157 aa).

The N-terminal 19 residues, 1–19 (MSWYRAASVGRRLVASGRI), are a transit peptide targeting the mitochondrion. Positions 50–150 (VNQIQETISN…PLVHQCYLNK (101 aa)) constitute a Glutaredoxin domain. Residue C61 participates in [2Fe-2S] cluster binding. K67 provides a ligand contact to glutathione. S-glutathionyl cysteine; alternate is present on C70. C70 and C73 are oxidised to a cystine. Positions 102 and 114 each coordinate glutathione. C146 serves as a coordination point for [2Fe-2S] cluster.

Belongs to the glutaredoxin family. In terms of assembly, monomer; active form. Homodimer; inactive form. The homodimer is probably linked by 1 2Fe-2S cluster.

The protein localises to the mitochondrion. The protein resides in the nucleus. The 2Fe-2S present in the homodimer leads to inactivation of the enzyme. The 2Fe-2S may serve as a redox sensor: the presence of one-electron oxidants or reductants leading to the loss of the 2Fe-2S cluster, subsequent monomerization and activation of the enzyme. Functionally, glutathione-dependent oxidoreductase that facilitates the maintenance of mitochondrial redox homeostasis upon induction of apoptosis by oxidative stress. Involved in response to hydrogen peroxide and regulation of apoptosis caused by oxidative stress. Acts as a very efficient catalyst of monothiol reactions because of its high affinity for protein glutathione-mixed disulfides. Can receive electrons not only from glutathione (GSH), but also from thioredoxin reductase supporting both monothiol and dithiol reactions. Efficiently catalyzes both glutathionylation and deglutathionylation of mitochondrial complex I, which in turn regulates the superoxide production by the complex. Overexpression decreases the susceptibility to apoptosis and prevents loss of cardiolipin and cytochrome c release. The protein is Glutaredoxin-2, mitochondrial (Glrx2) of Rattus norvegicus (Rat).